The chain runs to 201 residues: GTP cyclohydrolase 1 (201 aa).

Zn(2+) is bound by residues cysteine 90, histidine 93, and cysteine 163.

This sequence belongs to the GTP cyclohydrolase I family. In terms of assembly, toroid-shaped homodecamer, composed of two pentamers of five dimers.

The catalysed reaction is GTP + H2O = 7,8-dihydroneopterin 3'-triphosphate + formate + H(+). It participates in cofactor biosynthesis; 7,8-dihydroneopterin triphosphate biosynthesis; 7,8-dihydroneopterin triphosphate from GTP: step 1/1. In Streptomyces avermitilis (strain ATCC 31267 / DSM 46492 / JCM 5070 / NBRC 14893 / NCIMB 12804 / NRRL 8165 / MA-4680), this protein is GTP cyclohydrolase 1.